We begin with the raw amino-acid sequence, 330 residues long: Putative pentatricopeptide repeat-containing protein At5g36300 (330 aa).

9 PPR repeats span residues 10–44 (SLSM…GSRP), 45–75 (DPLS…VVRF), 83–113 (VRLY…KFRL), 114–148 (NSFV…GLPM), 149–179 (DVEI…LQRS), 185–215 (NIRT…IFED), 231–265 (SANL…GIEP), 266–296 (NLIM…IKET), and 302–330 (DVVT…LVTL).

The protein belongs to the PPR family. P subfamily.

This Arabidopsis thaliana (Mouse-ear cress) protein is Putative pentatricopeptide repeat-containing protein At5g36300.